The following is a 279-amino-acid chain: Undecaprenyl-diphosphatase (279 aa).

Helical transmembrane passes span 2-22, 44-64, 85-105, 113-133, 163-183, 188-208, 223-243, and 255-275; these read LIIE…TEWL, AFIE…VMLI, WQLW…AVPL, FYFM…FIWI, VLSI…AIIL, TVAA…YSGL, AQVL…LLAI, and FTIF…YSFF.

It belongs to the UppP family.

It localises to the cell membrane. The enzyme catalyses di-trans,octa-cis-undecaprenyl diphosphate + H2O = di-trans,octa-cis-undecaprenyl phosphate + phosphate + H(+). Catalyzes the dephosphorylation of undecaprenyl diphosphate (UPP). Confers resistance to bacitracin. The sequence is that of Undecaprenyl-diphosphatase from Streptococcus pyogenes serotype M28 (strain MGAS6180).